Consider the following 384-residue polypeptide: Calreticulin-3 (384 aa).

Positions 1–19 (MARALVQLWAICMLRVALA) are cleaved as a signal peptide. The tract at residues 20-197 (TVYFQEEFLD…GQSIESGSIE (178 aa)) is N-domain. An N-linked (GlcNAc...) asparagine glycan is attached at N42. Residues C105 and C137 are joined by a disulfide bond. 4 residues coordinate an alpha-D-glucoside: Y109, K111, Y128, and D135. 7 repeat units span residues 191-202 (IESGSIEYDWNL), 208-219 (ETSPAESKDWEQ), 221-230 (KDNKAQDWEK), 234-245 (DASTSKQSDWNG), 249-259 (GDWPAPMLQKP), 263-271 (DGLKPEGIH), and 273-283 (DVWLHRKMKNT). A 4 X approximate repeats region spans residues 191 to 245 (IESGSIEYDWNLTSLKKETSPAESKDWEQTKDNKAQDWEKHFLDASTSKQSDWNG). The segment at 198 to 294 (YDWNLTSLKK…YLTQYDLSEF (97 aa)) is P-domain. N-linked (GlcNAc...) asparagine glycosylation occurs at N201. A 3 X approximate repeats region spans residues 249-283 (GDWPAPMLQKPPYQDGLKPEGIHKDVWLHRKMKNT). The interval 295 to 384 (ENIGAIGLEL…FNQFHRRNEL (90 aa)) is C-domain. An alpha-D-glucoside is bound at residue E303. Residues 381-384 (RNEL) carry the Prevents secretion from ER motif.

Belongs to the calreticulin family. As to quaternary structure, component of an EIF2 complex at least composed of CELF1/CUGBP1, CALR, CALR3, EIF2S1, EIF2S2, HSP90B1 and HSPA5. In terms of tissue distribution, testis specific.

It localises to the endoplasmic reticulum lumen. Functionally, during spermatogenesis, may act as a lectin-independent chaperone for specific client proteins such as ADAM3. Required for sperm fertility. CALR3 capacity for calcium-binding may be absent or much lower than that of CALR. This is Calreticulin-3 (CALR3) from Homo sapiens (Human).